The sequence spans 323 residues: Aldo-keto reductase family 1 member C21 (323 aa).

20–24 (GFGTA) contacts NADP(+). Lys-31 is a binding site for substrate. Asp-50 provides a ligand contact to NADP(+). The Proton donor role is filled by Tyr-55. His-117 is a binding site for substrate. NADP(+) contacts are provided by residues 166–167 (SN), Gln-190, 216–224 (YGVLGTQRY), and 270–280 (TSLKEERIKEN).

This sequence belongs to the aldo/keto reductase family. As to quaternary structure, monomer. In terms of tissue distribution, detected in kidney and brain.

It is found in the cytoplasm. It carries out the reaction androsterone + NADP(+) = 5alpha-androstan-3,17-dione + NADPH + H(+). The enzyme catalyses androsterone + NAD(+) = 5alpha-androstan-3,17-dione + NADH + H(+). Inhibited by high concentrations of substrate. NADP-dependent 17-alpha-hydroxysteroid dehydrogenase that converts 5-alpha-androstane-3,17-dione into androsterone. Has lower 3-alpha-hydroxysteroid dehydrogenase activity. Has broad substrate specificity and acts on various 17-alpha-hydroxysteroids, 17-ketosteroids, 3-alpha hydroxysteroids and 3-ketosteroids. Reduction of keto groups is strictly stereoselective. Reduction of 17-ketosteroids yields only 17-alpha-hydroxysteroids. Likewise, reduction of 3-ketosteroids yields only 3-alpha-hydroxysteroids. The polypeptide is Aldo-keto reductase family 1 member C21 (Akr1c21) (Mus musculus (Mouse)).